We begin with the raw amino-acid sequence, 252 residues long: Imidazole glycerol phosphate synthase subunit HisF (252 aa).

Catalysis depends on residues Asp11 and Asp130.

The protein belongs to the HisA/HisF family. As to quaternary structure, heterodimer of HisH and HisF.

The protein localises to the cytoplasm. It catalyses the reaction 5-[(5-phospho-1-deoxy-D-ribulos-1-ylimino)methylamino]-1-(5-phospho-beta-D-ribosyl)imidazole-4-carboxamide + L-glutamine = D-erythro-1-(imidazol-4-yl)glycerol 3-phosphate + 5-amino-1-(5-phospho-beta-D-ribosyl)imidazole-4-carboxamide + L-glutamate + H(+). It functions in the pathway amino-acid biosynthesis; L-histidine biosynthesis; L-histidine from 5-phospho-alpha-D-ribose 1-diphosphate: step 5/9. Its function is as follows. IGPS catalyzes the conversion of PRFAR and glutamine to IGP, AICAR and glutamate. The HisF subunit catalyzes the cyclization activity that produces IGP and AICAR from PRFAR using the ammonia provided by the HisH subunit. The polypeptide is Imidazole glycerol phosphate synthase subunit HisF (Geobacillus sp. (strain WCH70)).